Consider the following 195-residue polypeptide: 3-isopropylmalate dehydratase small subunit (195 aa).

This sequence belongs to the LeuD family. LeuD type 1 subfamily. Heterodimer of LeuC and LeuD.

It catalyses the reaction (2R,3S)-3-isopropylmalate = (2S)-2-isopropylmalate. It participates in amino-acid biosynthesis; L-leucine biosynthesis; L-leucine from 3-methyl-2-oxobutanoate: step 2/4. In terms of biological role, catalyzes the isomerization between 2-isopropylmalate and 3-isopropylmalate, via the formation of 2-isopropylmaleate. This chain is 3-isopropylmalate dehydratase small subunit, found in Oenococcus oeni (strain ATCC BAA-331 / PSU-1).